The following is a 318-amino-acid chain: Aspartate carbamoyltransferase catalytic subunit (318 aa).

Carbamoyl phosphate contacts are provided by Arg59 and Thr60. Residue Lys87 participates in L-aspartate binding. Carbamoyl phosphate-binding residues include Arg109, His137, and Gln140. 2 residues coordinate L-aspartate: Arg170 and Arg224. Carbamoyl phosphate contacts are provided by Gly265 and Pro266.

The protein belongs to the aspartate/ornithine carbamoyltransferase superfamily. ATCase family. As to quaternary structure, heterododecamer (2C3:3R2) of six catalytic PyrB chains organized as two trimers (C3), and six regulatory PyrI chains organized as three dimers (R2).

It catalyses the reaction carbamoyl phosphate + L-aspartate = N-carbamoyl-L-aspartate + phosphate + H(+). Its pathway is pyrimidine metabolism; UMP biosynthesis via de novo pathway; (S)-dihydroorotate from bicarbonate: step 2/3. Catalyzes the condensation of carbamoyl phosphate and aspartate to form carbamoyl aspartate and inorganic phosphate, the committed step in the de novo pyrimidine nucleotide biosynthesis pathway. The protein is Aspartate carbamoyltransferase catalytic subunit of Rhizobium johnstonii (strain DSM 114642 / LMG 32736 / 3841) (Rhizobium leguminosarum bv. viciae).